The primary structure comprises 151 residues: Salivary C-type lectin 2 (151 aa).

Residues 1–15 (MKLLLSFALLGLVAC) form the signal peptide. The region spanning 25-147 (YCFPNEVATW…CTSKRRFVCE (123 aa)) is the C-type lectin domain. Disulfide bonds link Cys41–Cys146 and Cys118–Cys138.

The cofactor is Ca(2+). In terms of tissue distribution, expressed in female salivary gland. Not detected or low-level expression in female midgut and fat body.

It is found in the secreted. Its function is as follows. Salivary protein with carbohydrate-binding activity. Binds to D-mannose, D-galactose, D-glucose and maltose. Agglutinates host erythrocytes. Probably participates in mosquito innate immune responses to prevent microorganism multiplication in sugar and blood meals. Functionally, (Microbial infection) Binds to the surface of and agglutinates Escherichia coli in vitro. In terms of biological role, (Microbial infection) Binds to the surface of and agglutinates Pseudomonas aeruginosa in vitro. (Microbial infection) Binds to the surface of and agglutinates Bacillus subtilis in vitro. Its function is as follows. (Microbial infection) Agglutinates Staphylococcus aureus in vitro. Functionally, (Microbial infection) Agglutinates Candida albicans in vitro. In terms of biological role, (Microbial infection) Does not affect replication of dengue virus type 2 in host cells. The sequence is that of Salivary C-type lectin 2 from Aedes albopictus (Asian tiger mosquito).